We begin with the raw amino-acid sequence, 154 residues long: Small heat shock protein C2 (154 aa).

The sHSP domain maps to 43 to 154 (STEKNLIPRT…GKTRKIEVKG (112 aa)).

Belongs to the small heat shock protein (HSP20) family.

The protein is Small heat shock protein C2 (hspC2) of Rickettsia felis (strain ATCC VR-1525 / URRWXCal2) (Rickettsia azadi).